Consider the following 437-residue polypeptide: Adenylosuccinate synthetase (437 aa).

Residues 12–18 (GDEGKGK) and 40–42 (GHT) contribute to the GTP site. Asp-13 acts as the Proton acceptor in catalysis. The Mg(2+) site is built by Asp-13 and Gly-40. Residues 13–16 (DEGK), 38–41 (NAGH), Thr-128, Arg-142, Gln-223, Thr-238, and Arg-302 contribute to the IMP site. His-41 acts as the Proton donor in catalysis. The tract at residues 119-138 (QRGERRIGTTGRGIGPTYAD) is disordered. Residue 298–304 (TTTGRRR) participates in substrate binding. Residues Arg-304, 330–332 (KLD), and 412–414 (SLG) contribute to the GTP site.

It belongs to the adenylosuccinate synthetase family. In terms of assembly, homodimer. Mg(2+) is required as a cofactor.

The protein localises to the cytoplasm. It carries out the reaction IMP + L-aspartate + GTP = N(6)-(1,2-dicarboxyethyl)-AMP + GDP + phosphate + 2 H(+). It functions in the pathway purine metabolism; AMP biosynthesis via de novo pathway; AMP from IMP: step 1/2. Functionally, plays an important role in the de novo pathway of purine nucleotide biosynthesis. Catalyzes the first committed step in the biosynthesis of AMP from IMP. This chain is Adenylosuccinate synthetase, found in Synechococcus sp. (strain WH7803).